Consider the following 306-residue polypeptide: Protoheme IX farnesyltransferase (306 aa).

9 helical membrane passes run 32-52, 58-78, 103-123, 126-146, 153-173, 180-200, 227-247, 249-269, and 278-298; these read VVAL…PGAL, IPAM…NHIV, NAIV…YALV, LTAF…TMYL, NITI…TAMT, ALLL…ALAI, ILLY…VGMS, WLYL…AWQL, and AMAT…ILLL.

The protein belongs to the UbiA prenyltransferase family. Protoheme IX farnesyltransferase subfamily.

Its subcellular location is the cell inner membrane. The enzyme catalyses heme b + (2E,6E)-farnesyl diphosphate + H2O = Fe(II)-heme o + diphosphate. It participates in porphyrin-containing compound metabolism; heme O biosynthesis; heme O from protoheme: step 1/1. Converts heme B (protoheme IX) to heme O by substitution of the vinyl group on carbon 2 of heme B porphyrin ring with a hydroxyethyl farnesyl side group. This Colwellia psychrerythraea (strain 34H / ATCC BAA-681) (Vibrio psychroerythus) protein is Protoheme IX farnesyltransferase.